A 186-amino-acid chain; its full sequence is Elongation factor P (186 aa).

This sequence belongs to the elongation factor P family.

The protein localises to the cytoplasm. The protein operates within protein biosynthesis; polypeptide chain elongation. Its function is as follows. Involved in peptide bond synthesis. Stimulates efficient translation and peptide-bond synthesis on native or reconstituted 70S ribosomes in vitro. Probably functions indirectly by altering the affinity of the ribosome for aminoacyl-tRNA, thus increasing their reactivity as acceptors for peptidyl transferase. This is Elongation factor P from Streptococcus mutans serotype c (strain ATCC 700610 / UA159).